Consider the following 393-residue polypeptide: MEIKGFSFSAVEAGIRYQDRLDLGLIYSDHPVVAAGALTTSLVKAAPVLIDIDRLEDGCAQAILVNSGCANACTGEAGMEVAFVTGELLAKELEIKPENILLSSTGVIGEPLNVRAFRDNISPLVQGLAPDNFEKVAQAIMTTDTVQKVCYHSVEIDGVDVHFMGMAKGAGMIMPNMATMLSFVITDAQIGSAQLKEALTPAVKKTFNRITVDGDTSTNDMVLVMANGGAQNSSIKSGTQAAEDFQGALQYVLMDLALKIVADGEGASKMITIRVCGAREDAEAEQVARTVANSSLVKTAFFGEDANWGRILAAMGRAGVPFDPYQVDISFGDVTLVRDGLAVGRSAEDTATAILKEKEITVCIDLKSGKCCEEVYTCDFSIDYVKINADYRS.

Substrate contacts are provided by Thr-142, Lys-168, Thr-179, Glu-265, Asn-388, and Ser-393. The active-site Nucleophile is the Thr-179.

Belongs to the ArgJ family. In terms of assembly, heterotetramer of two alpha and two beta chains.

It localises to the cytoplasm. The enzyme catalyses N(2)-acetyl-L-ornithine + L-glutamate = N-acetyl-L-glutamate + L-ornithine. The catalysed reaction is L-glutamate + acetyl-CoA = N-acetyl-L-glutamate + CoA + H(+). It participates in amino-acid biosynthesis; L-arginine biosynthesis; L-ornithine and N-acetyl-L-glutamate from L-glutamate and N(2)-acetyl-L-ornithine (cyclic): step 1/1. It functions in the pathway amino-acid biosynthesis; L-arginine biosynthesis; N(2)-acetyl-L-ornithine from L-glutamate: step 1/4. Its function is as follows. Catalyzes two activities which are involved in the cyclic version of arginine biosynthesis: the synthesis of N-acetylglutamate from glutamate and acetyl-CoA as the acetyl donor, and of ornithine by transacetylation between N(2)-acetylornithine and glutamate. This is Arginine biosynthesis bifunctional protein ArgJ from Desulfotalea psychrophila (strain LSv54 / DSM 12343).